The sequence spans 473 residues: Ribosomal RNA small subunit methyltransferase F (473 aa).

Residues 123–129, glutamate 147, aspartate 174, and aspartate 192 contribute to the S-adenosyl-L-methionine site; that span reads AAAPGSK. Cysteine 245 (nucleophile) is an active-site residue.

The protein belongs to the class I-like SAM-binding methyltransferase superfamily. RsmB/NOP family.

The protein localises to the cytoplasm. It carries out the reaction cytidine(1407) in 16S rRNA + S-adenosyl-L-methionine = 5-methylcytidine(1407) in 16S rRNA + S-adenosyl-L-homocysteine + H(+). In terms of biological role, specifically methylates the cytosine at position 1407 (m5C1407) of 16S rRNA. The sequence is that of Ribosomal RNA small subunit methyltransferase F from Vibrio cholerae serotype O1 (strain ATCC 39315 / El Tor Inaba N16961).